The primary structure comprises 308 residues: Glycine betaine uptake system ATP-binding protein YehX (308 aa).

The ABC transporter domain occupies 2–235 (IEFSHVSKLF…PANDFVRQFF (234 aa)). 34–41 (GTSGSGKS) serves as a coordination point for ATP.

Belongs to the ABC transporter superfamily. In terms of assembly, the complex is composed of two ATP-binding proteins (YehX), two transmembrane proteins (YehW and YehY) and a solute-binding protein (YehZ).

The catalysed reaction is glycine betaine(out) + ATP + H2O = glycine betaine(in) + ADP + phosphate + H(+). Part of an ABC transporter complex involved in low-affinity glycine betaine uptake. Probably responsible for energy coupling to the transport system. In Escherichia coli (strain K12), this protein is Glycine betaine uptake system ATP-binding protein YehX (yehX).